Consider the following 374-residue polypeptide: F-box/kelch-repeat protein At2g24250 (374 aa).

In terms of domain architecture, F-box spans 14–63 (PDWSQLPEELLHIISTHLEDHYFDAVHARSVCRSWRSTFPFPSSLLRQSY). Kelch repeat units follow at residues 100–150 (SEYF…PLGH) and 249–301 (NFLV…LGNF).

This is F-box/kelch-repeat protein At2g24250 from Arabidopsis thaliana (Mouse-ear cress).